Reading from the N-terminus, the 285-residue chain is Undecaprenyl-diphosphatase 2 (285 aa).

8 consecutive transmembrane segments (helical) span residues 5 to 25 (MDLLHVFILAVIQGLAELLPV), 47 to 67 (MTFLLVMLHTGTMFAVIVYFW), 86 to 106 (WYVLLATAITGVLGLLLQSLI), 122 to 142 (LFSNSKLMAAALAAAGILIIL), 156 to 176 (LPSAMIIGAVQALCLPFRGFS), 198 to 218 (FSFALAVVLTPAVIVKELVRL), 235 to 255 (SLLLPSIFGMVFSFLTGLLAL), and 265 to 285 (GRWYLFGIYCLAFSGVVLTLA).

Belongs to the UppP family.

It localises to the cell inner membrane. It catalyses the reaction di-trans,octa-cis-undecaprenyl diphosphate + H2O = di-trans,octa-cis-undecaprenyl phosphate + phosphate + H(+). Its function is as follows. Catalyzes the dephosphorylation of undecaprenyl diphosphate (UPP). Confers resistance to bacitracin. In Acinetobacter baylyi (strain ATCC 33305 / BD413 / ADP1), this protein is Undecaprenyl-diphosphatase 2.